The primary structure comprises 81 residues: ATP synthase subunit c (81 aa).

The next 2 membrane-spanning stretches (helical) occupy residues 5 to 25 (IAAG…IGAG) and 57 to 77 (VGLV…FVFA).

Belongs to the ATPase C chain family. As to quaternary structure, F-type ATPases have 2 components, F(1) - the catalytic core - and F(0) - the membrane proton channel. F(1) has five subunits: alpha(3), beta(3), gamma(1), delta(1), epsilon(1). F(0) has three main subunits: a(1), b(2) and c(10-14). The alpha and beta chains form an alternating ring which encloses part of the gamma chain. F(1) is attached to F(0) by a central stalk formed by the gamma and epsilon chains, while a peripheral stalk is formed by the delta and b chains.

It localises to the cell membrane. F(1)F(0) ATP synthase produces ATP from ADP in the presence of a proton or sodium gradient. F-type ATPases consist of two structural domains, F(1) containing the extramembraneous catalytic core and F(0) containing the membrane proton channel, linked together by a central stalk and a peripheral stalk. During catalysis, ATP synthesis in the catalytic domain of F(1) is coupled via a rotary mechanism of the central stalk subunits to proton translocation. In terms of biological role, key component of the F(0) channel; it plays a direct role in translocation across the membrane. A homomeric c-ring of between 10-14 subunits forms the central stalk rotor element with the F(1) delta and epsilon subunits. This is ATP synthase subunit c from Mycobacterium marinum (strain ATCC BAA-535 / M).